A 364-amino-acid chain; its full sequence is Cell cycle control protein 50A (364 aa).

The disordered stretch occupies residues 1–28; it reads MAMNYSAKDEVDGGPAGPPGGAAKTRRP. N-acetylalanine is present on alanine 2. Residues 2–49 are Cytoplasmic-facing; the sequence is AMNYSAKDEVDGGPAGPPGGAAKTRRPDNTAFKQQRLPAWQPILTAGT. The chain crosses the membrane as a helical span at residues 50 to 70; sequence VLPTFFIIGLIFIPIGIGIFV. The Exoplasmic loop portion of the chain corresponds to 71–328; that stretch reads TSNNIREIEI…SWMGGKNPFL (258 aa). Intrachain disulfides connect cysteine 91-cysteine 104, cysteine 94-cysteine 102, and cysteine 157-cysteine 171. Asparagine 98 is a glycosylation site (N-linked (GlcNAc...) asparagine). Asparagine 297 carries N-linked (GlcNAc...) asparagine glycosylation. Residues 329 to 349 traverse the membrane as a helical segment; it reads GIAYITIGSISFLLGVVLLVI. Over 350 to 364 the chain is Cytoplasmic; the sequence is NHKYRNSSNTADITI.

This sequence belongs to the CDC50/LEM3 family. In terms of assembly, component of various P4-ATPase flippase complexes which consists of a catalytic alpha subunit and an accessory beta subunit. Interacts with ATP8A1 to form a flippase complex; this complex forms an intermediate phosphoenzyme. The ATP8A2:TMEM30A flippase complex has been purified, and ATP8B1:TMEM30A and ATP8B2:TMEM30A flippase complexes have been shown to form intermediate phosphoenzymes in vitro. Interacts with alpha subunits ATP8A1, ATP8B1, ATP8B2, ATP8B4, ATP10A, ATP10B, ATP10D, ATP11A, ATP11B and ATP11C. N-glycosylated. Contains high mannose-type oligosaccharides. Expressed in photoreceptor cells; detected in retina outer segment (at protein level). Detected in hepatocytes liver sinusoidal endothelial cells and kidney brush border of the proximal tubules (at protein level). Expressed in brain (at protein level).

Its subcellular location is the membrane. The protein resides in the cell membrane. It localises to the golgi apparatus. It is found in the cytoplasmic vesicle. The protein localises to the secretory vesicle membrane. Its subcellular location is the apical cell membrane. Accessory component of a P4-ATPase flippase complex which catalyzes the hydrolysis of ATP coupled to the transport of aminophospholipids from the outer to the inner leaflet of various membranes and ensures the maintenance of asymmetric distribution of phospholipids. Phospholipid translocation also seems to be implicated in vesicle formation and in uptake of lipid signaling molecules. The beta subunit may assist in binding of the phospholipid substrate. Required for the proper folding, assembly and ER to Golgi exit of the ATP8A2:TMEM30A flippase complex. ATP8A2:TMEM30A may be involved in regulation of neurite outgrowth, and, reconstituted to liposomes, predomiminantly transports phosphatidylserine (PS) and to a lesser extent phosphatidylethanolamine (PE). The ATP8A1:TMEM30A flippase complex seems to play a role in regulation of cell migration probably involving flippase-mediated translocation of phosphatidylethanolamine (PE) at the plasma membrane. Required for the formation of the ATP8A2, ATP8B1 and ATP8B2 P-type ATPAse intermediate phosphoenzymes. Involved in uptake of platelet-activating factor (PAF). Can also mediate the export of alpha subunits ATP8A1, ATP8B1, ATP8B2, ATP8B4, ATP10A, ATP10B, ATP10D, ATP11A, ATP11B and ATP11C from the ER to other membrane localizations. The sequence is that of Cell cycle control protein 50A from Mus musculus (Mouse).